Reading from the N-terminus, the 596-residue chain is Ulvan-active sulfatase (596 aa).

A signal peptide spans 1–27; that stretch reads MLFLRFKFFNNRLLFVSVLCFVICVSC. Positions 58, 59, 97, 306, and 307 each coordinate Ca(2+). Catalysis depends on C97, which acts as the Nucleophile. A 3-oxoalanine (Cys) modification is found at C97.

Belongs to the sulfatase family. The cofactor is Ca(2+). Post-translationally, the conversion to 3-oxoalanine (also known as C-formylglycine, FGly), of a serine or cysteine residue in prokaryotes and of a cysteine residue in eukaryotes, is critical for catalytic activity.

It is found in the periplasm. Its function is as follows. Sulfatase involved in ulvan degradation. Ulvan is the main polysaccharide component of the Ulvales (green seaweed) cell wall. It is composed of disaccharide building blocks comprising 3-sulfated rhamnose (Rha3S) linked to D-glucuronic acid (GlcA), L-iduronic acid (IduA), or D-xylose (Xyl). The sulfatase desulfates Xyl2S-Rha3S, product of the degradation of ulvan by endo-acting alpha-1,4-L-rhamnosidase, to Xyl-Rha3S. In Formosa agariphila (strain DSM 15362 / KCTC 12365 / LMG 23005 / KMM 3901 / M-2Alg 35-1), this protein is Ulvan-active sulfatase.